We begin with the raw amino-acid sequence, 200 residues long: Large ribosomal subunit protein uL22c (200 aa).

This sequence belongs to the universal ribosomal protein uL22 family. Part of the 50S ribosomal subunit.

It is found in the plastid. The protein resides in the chloroplast. Functionally, this protein binds specifically to 23S rRNA. Its function is as follows. The globular domain of the protein is located near the polypeptide exit tunnel on the outside of the subunit, while an extended beta-hairpin is found that lines the wall of the exit tunnel in the center of the 70S ribosome. The sequence is that of Large ribosomal subunit protein uL22c (rpl22) from Medicago sativa (Alfalfa).